Reading from the N-terminus, the 141-residue chain is Nucleoside diphosphate kinase (141 aa).

ATP is bound by residues K11, F59, R87, T93, R104, and N114. H117 functions as the Pros-phosphohistidine intermediate in the catalytic mechanism.

It belongs to the NDK family. Homotetramer. The cofactor is Mg(2+).

The protein resides in the cytoplasm. It catalyses the reaction a 2'-deoxyribonucleoside 5'-diphosphate + ATP = a 2'-deoxyribonucleoside 5'-triphosphate + ADP. It carries out the reaction a ribonucleoside 5'-diphosphate + ATP = a ribonucleoside 5'-triphosphate + ADP. Functionally, major role in the synthesis of nucleoside triphosphates other than ATP. The ATP gamma phosphate is transferred to the NDP beta phosphate via a ping-pong mechanism, using a phosphorylated active-site intermediate. The protein is Nucleoside diphosphate kinase of Vibrio campbellii (strain ATCC BAA-1116).